The following is a 917-amino-acid chain: Protein translocase subunit SecA (917 aa).

Residues Q87, 105–109 (GEGKT), and D501 each bind ATP. The Zn(2+) site is built by C901, C903, C912, and H913.

The protein belongs to the SecA family. Monomer and homodimer. Part of the essential Sec protein translocation apparatus which comprises SecA, SecYEG and auxiliary proteins SecDF-YajC and YidC. Requires Zn(2+) as cofactor.

It is found in the cell inner membrane. Its subcellular location is the cytoplasm. It carries out the reaction ATP + H2O + cellular proteinSide 1 = ADP + phosphate + cellular proteinSide 2.. In terms of biological role, part of the Sec protein translocase complex. Interacts with the SecYEG preprotein conducting channel. Has a central role in coupling the hydrolysis of ATP to the transfer of proteins into and across the cell membrane, serving both as a receptor for the preprotein-SecB complex and as an ATP-driven molecular motor driving the stepwise translocation of polypeptide chains across the membrane. The sequence is that of Protein translocase subunit SecA from Granulibacter bethesdensis (strain ATCC BAA-1260 / CGDNIH1).